The sequence spans 132 residues: Protein LEKR1 (132 aa).

Residues 37 to 116 (FKAMEEKVKA…KKQLSHLQDE (80 aa)) adopt a coiled-coil conformation.

This Homo sapiens (Human) protein is Protein LEKR1 (LEKR1).